The following is a 63-amino-acid chain: Cecropin-C (63 aa).

The N-terminal stretch at 1-23 is a signal peptide; the sequence is MNFNKIFVFVALILAISLGQSEA. The residue at position 62 (R62) is an Arginine amide.

Belongs to the cecropin family.

The protein localises to the secreted. In terms of biological role, cecropins have lytic and antibacterial activity against several Gram-positive and Gram-negative bacteria. This Drosophila orena (Fruit fly) protein is Cecropin-C (CecC).